Here is a 1024-residue protein sequence, read N- to C-terminus: Carbamoyl phosphate synthase large chain (1024 aa).

A carboxyphosphate synthetic domain region spans residues 1-402 (MPKRTDLQTI…SLQKALRSTE (402 aa)). ATP-binding residues include arginine 129, arginine 169, glycine 175, glycine 176, glutamate 208, isoleucine 210, glutamate 215, glycine 241, valine 242, histidine 243, glutamine 285, and glutamate 299. The 196-residue stretch at 133 to 328 (QAAMKKIGVE…IAKIAALLAV (196 aa)) folds into the ATP-grasp 1 domain. Mg(2+)-binding residues include glutamine 285, glutamate 299, and asparagine 301. Mn(2+) is bound by residues glutamine 285, glutamate 299, and asparagine 301. An oligomerization domain region spans residues 403 to 546 (GDIRGVYAEM…YSTYEWEDEV (144 aa)). Positions 547 to 929 (APTDKPKVVI…AFYRAQLGAK (383 aa)) are carbamoyl phosphate synthetic domain. Residues 671–863 (NALCERLGLP…LAKSAARIAA (193 aa)) enclose the ATP-grasp 2 domain. Arginine 707, glutamine 747, leucine 749, glutamate 754, glycine 779, valine 780, histidine 781, serine 782, glutamine 822, and glutamate 834 together coordinate ATP. Positions 822, 834, and 836 each coordinate Mg(2+). Glutamine 822, glutamate 834, and asparagine 836 together coordinate Mn(2+). Residues 930-1024 (NYLPLEGTAL…GVRSLQEWVK (95 aa)) form the MGS-like domain. The tract at residues 930 to 1024 (NYLPLEGTAL…GVRSLQEWVK (95 aa)) is allosteric domain.

This sequence belongs to the CarB family. As to quaternary structure, composed of two chains; the small (or glutamine) chain promotes the hydrolysis of glutamine to ammonia, which is used by the large (or ammonia) chain to synthesize carbamoyl phosphate. Tetramer of heterodimers (alpha,beta)4. The cofactor is Mg(2+). Requires Mn(2+) as cofactor.

The enzyme catalyses hydrogencarbonate + L-glutamine + 2 ATP + H2O = carbamoyl phosphate + L-glutamate + 2 ADP + phosphate + 2 H(+). The catalysed reaction is hydrogencarbonate + NH4(+) + 2 ATP = carbamoyl phosphate + 2 ADP + phosphate + 2 H(+). Its pathway is amino-acid biosynthesis; L-arginine biosynthesis; carbamoyl phosphate from bicarbonate: step 1/1. It participates in pyrimidine metabolism; UMP biosynthesis via de novo pathway; (S)-dihydroorotate from bicarbonate: step 1/3. Its function is as follows. Large subunit of the glutamine-dependent carbamoyl phosphate synthetase (CPSase). CPSase catalyzes the formation of carbamoyl phosphate from the ammonia moiety of glutamine, carbonate, and phosphate donated by ATP, constituting the first step of 2 biosynthetic pathways, one leading to arginine and/or urea and the other to pyrimidine nucleotides. The large subunit (synthetase) binds the substrates ammonia (free or transferred from glutamine from the small subunit), hydrogencarbonate and ATP and carries out an ATP-coupled ligase reaction, activating hydrogencarbonate by forming carboxy phosphate which reacts with ammonia to form carbamoyl phosphate. This Deinococcus radiodurans (strain ATCC 13939 / DSM 20539 / JCM 16871 / CCUG 27074 / LMG 4051 / NBRC 15346 / NCIMB 9279 / VKM B-1422 / R1) protein is Carbamoyl phosphate synthase large chain.